Reading from the N-terminus, the 162-residue chain is MTGKQHQKHEQKARQAQVKAQINRDKARSKLLRQREKLARRRARNRRQSEVRRGNQSKAQHDTQSETQRGTQSKSQRDNETGGTKNPTAHSTLPPQKTNAENAVRNSHSTVPELPKYSSVPARERLYGLRLHRETTASEDKSVTVAVTRAPKAERQRGGADE.

The tract at residues 1-162 is disordered; sequence MTGKQHQKHE…AERQRGGADE (162 aa). Composition is skewed to basic and acidic residues over residues 22 to 37 and 47 to 64; these read INRD…QREK and RQSE…HDTQ. Composition is skewed to polar residues over residues 65 to 74 and 81 to 110; these read SETQRGTQSK and TGGT…SHST. Basic and acidic residues-rich tracts occupy residues 122 to 142 and 151 to 162; these read ARER…EDKS and PKAERQRGGADE.

The protein belongs to the gas vesicle GvpI family. In terms of assembly, gvpF to GvpM interact with each other in vitro, and may form multi-subunit complex(es). Interacts with GvpC and GvpO.

Its subcellular location is the gas vesicle. Functionally, proteins GvpF to GvpM might be involved in nucleating gas vesicle formation. A minor component of the gas vesicle. Gas vesicles are hollow, gas filled proteinaceous nanostructures found in some microorganisms. They allow positioning of halobacteria at the optimal depth for growth in the poorly aerated, shallow brine pools of their habitat. Expression of a 9.5 kb mc-vac DNA fragment containing 2 divergently transcribed regions (gvpD-gvpE-gvpF-gvpG-gvpH-gvpI-gvpJ-gvpK-gvpL-gvpM and gvpA-gvpC-gvpN-gvpO) allows H.volcanii to produce gas vesicles. In Haloferax mediterranei (strain ATCC 33500 / DSM 1411 / JCM 8866 / NBRC 14739 / NCIMB 2177 / R-4) (Halobacterium mediterranei), this protein is Gas vesicle protein I.